The sequence spans 284 residues: Pantothenate synthetase (284 aa).

30–37 (MGALHEGH) contacts ATP. Residue His37 is the Proton donor of the active site. Gln61 is a (R)-pantoate binding site. Gln61 provides a ligand contact to beta-alanine. 147–150 (GEKD) provides a ligand contact to ATP. A (R)-pantoate-binding site is contributed by Gln153. Residues Val176 and 184–187 (TSSR) each bind ATP.

This sequence belongs to the pantothenate synthetase family. Homodimer.

The protein localises to the cytoplasm. The enzyme catalyses (R)-pantoate + beta-alanine + ATP = (R)-pantothenate + AMP + diphosphate + H(+). It participates in cofactor biosynthesis; (R)-pantothenate biosynthesis; (R)-pantothenate from (R)-pantoate and beta-alanine: step 1/1. In terms of biological role, catalyzes the condensation of pantoate with beta-alanine in an ATP-dependent reaction via a pantoyl-adenylate intermediate. This is Pantothenate synthetase from Chlorobaculum tepidum (strain ATCC 49652 / DSM 12025 / NBRC 103806 / TLS) (Chlorobium tepidum).